The primary structure comprises 373 residues: Chaperone protein DnaJ (373 aa).

Residues 4–68 enclose the J domain; sequence DFYEILGVSR…QARANYDRFG (65 aa). The CR-type zinc-finger motif lies at 132-214; sequence GGEKEIRINH…CGGQGHIQVS (83 aa). The Zn(2+) site is built by C145, C148, C162, C165, C188, C191, C202, and C205. 4 CXXCXGXG motif repeats span residues 145 to 152, 162 to 169, 188 to 195, and 202 to 209; these read CKTCQGTG, CSTCGGVG, CPTCGGSG, and CESCGGQG.

It belongs to the DnaJ family. Homodimer. Zn(2+) is required as a cofactor.

The protein resides in the cytoplasm. Participates actively in the response to hyperosmotic and heat shock by preventing the aggregation of stress-denatured proteins and by disaggregating proteins, also in an autonomous, DnaK-independent fashion. Unfolded proteins bind initially to DnaJ; upon interaction with the DnaJ-bound protein, DnaK hydrolyzes its bound ATP, resulting in the formation of a stable complex. GrpE releases ADP from DnaK; ATP binding to DnaK triggers the release of the substrate protein, thus completing the reaction cycle. Several rounds of ATP-dependent interactions between DnaJ, DnaK and GrpE are required for fully efficient folding. Also involved, together with DnaK and GrpE, in the DNA replication of plasmids through activation of initiation proteins. The protein is Chaperone protein DnaJ of Thermosynechococcus vestitus (strain NIES-2133 / IAM M-273 / BP-1).